The following is a 95-amino-acid chain: Large ribosomal subunit protein eL31 (95 aa).

It belongs to the eukaryotic ribosomal protein eL31 family.

This is Large ribosomal subunit protein eL31 (rpl31e) from Pyrococcus horikoshii (strain ATCC 700860 / DSM 12428 / JCM 9974 / NBRC 100139 / OT-3).